The sequence spans 318 residues: Trans-prenyltransferase (318 aa).

The helical transmembrane segment at 1 to 21 threads the bilayer; it reads MLHLIYISIIVVLIIILISYT. Positions 85, 88, and 122 each coordinate isopentenyl diphosphate. Mg(2+)-binding residues include aspartate 129 and aspartate 135. Arginine 140 is a dimethylallyl diphosphate binding site. Arginine 141 serves as a coordination point for isopentenyl diphosphate. Lysine 216, threonine 217, and glutamine 254 together coordinate dimethylallyl diphosphate.

The protein belongs to the FPP/GGPP synthase family. Asfivirus trans-prenyltransferase subfamily. Mg(2+) is required as a cofactor.

It is found in the host endoplasmic reticulum. Its subcellular location is the host membrane. It carries out the reaction isopentenyl diphosphate + dimethylallyl diphosphate = (2E)-geranyl diphosphate + diphosphate. The catalysed reaction is isopentenyl diphosphate + (2E)-geranyl diphosphate = (2E,6E)-farnesyl diphosphate + diphosphate. It catalyses the reaction isopentenyl diphosphate + (2E,6E)-farnesyl diphosphate = (2E,6E,10E)-geranylgeranyl diphosphate + diphosphate. The enzyme catalyses isopentenyl diphosphate + (2E,6E,10E)-geranylgeranyl diphosphate = (2E,6E,10E,14E)-geranylfarnesyl diphosphate + diphosphate. Its pathway is isoprenoid biosynthesis; farnesyl diphosphate biosynthesis; farnesyl diphosphate from geranyl diphosphate and isopentenyl diphosphate: step 1/1. The protein operates within isoprenoid biosynthesis; geranyl diphosphate biosynthesis; geranyl diphosphate from dimethylallyl diphosphate and isopentenyl diphosphate: step 1/1. It functions in the pathway isoprenoid biosynthesis; geranylgeranyl diphosphate biosynthesis; geranylgeranyl diphosphate from farnesyl diphosphate and isopentenyl diphosphate: step 1/1. In terms of biological role, trans-prenyltransferase that catalyzes the sequential condensation of isopentenyl diphosphate (IPP) with different allylic diphosphates, such as dimethylallyl diphosphate (DMAPP), geranyl diphosphate (GPP), farnesyl diphosphate (FPP) and geranylgeranyl diphosphate (GGPP), farnesyl diphosphate being the best allylic substrate. This chain is Trans-prenyltransferase, found in Ornithodoros (relapsing fever ticks).